The primary structure comprises 275 residues: MGLSASAPAASTVQTSTPAASDHQTAAPTSGCPMHEGKVKGCPVSAEPSDSTCGSKTNSVPAHQERAYEYVQCPITGAKAANKENLDPSNLMPPPNQTPAPDQPFPLSTVREESSIPRADSDKKWVYPSEQMFWNAMLRKGWKWKDEDISQKDMYNIIRIHNQNNEQAWKEILKWEALHAAECPCGPSLIRFGGKAKEYSPRARIRSWMGYELPFDRHDWIINRCGTEVRYVIDYYDGGEVNQDYQFTILDVRPALDSLSAVWDRMKVAWWRWTS.

2 disordered regions span residues Met1 to Ser59 and Lys83 to Asp102. The N-myristoyl glycine moiety is linked to residue Gly2. Residues Ala9–Pro28 show a composition bias toward polar residues. 2 HRM repeats span residues Gly31 to Glu36 and Gly41 to Ala46. Positions Pro48–Ser59 are enriched in polar residues. The segment covering Leu91–Asp102 has biased composition (pro residues).

Belongs to the cytochrome c-type heme lyase family.

The protein resides in the mitochondrion inner membrane. It is found in the membrane. It carries out the reaction holo-[cytochrome c] = apo-[cytochrome c] + heme b. In terms of biological role, lyase that catalyzes the covalent linking of the heme group to the cytochrome C apoprotein to produce the mature functional cytochrome. This Bos taurus (Bovine) protein is Holocytochrome c-type synthase.